Here is a 404-residue protein sequence, read N- to C-terminus: Trigger factor (404 aa).

A PPIase FKBP-type domain is found at 160–225 (KDHLFVRTEE…VLEVKTLKLP (66 aa)).

The protein belongs to the FKBP-type PPIase family. Tig subfamily.

The protein resides in the cytoplasm. The enzyme catalyses [protein]-peptidylproline (omega=180) = [protein]-peptidylproline (omega=0). In terms of biological role, involved in protein export. Acts as a chaperone by maintaining the newly synthesized protein in an open conformation. Functions as a peptidyl-prolyl cis-trans isomerase. The protein is Trigger factor of Thermus thermophilus (strain ATCC BAA-163 / DSM 7039 / HB27).